Here is a 632-residue protein sequence, read N- to C-terminus: Biosynthetic arginine decarboxylase (632 aa).

Lys101 carries the N6-(pyridoxal phosphate)lysine modification. 281–291 serves as a coordination point for substrate; it reads FDVGGGLGVDY.

The protein belongs to the Orn/Lys/Arg decarboxylase class-II family. SpeA subfamily. Requires Mg(2+) as cofactor. Pyridoxal 5'-phosphate serves as cofactor.

The catalysed reaction is L-arginine + H(+) = agmatine + CO2. It participates in amine and polyamine biosynthesis; agmatine biosynthesis; agmatine from L-arginine: step 1/1. Its function is as follows. Catalyzes the biosynthesis of agmatine from arginine. In Klebsiella pneumoniae (strain 342), this protein is Biosynthetic arginine decarboxylase.